Here is a 304-residue protein sequence, read N- to C-terminus: Aspartate carbamoyltransferase catalytic subunit (304 aa).

Arginine 49 and threonine 50 together coordinate carbamoyl phosphate. Residue lysine 77 participates in L-aspartate binding. Arginine 99, histidine 127, and glutamine 130 together coordinate carbamoyl phosphate. The L-aspartate site is built by arginine 160 and arginine 211. 2 residues coordinate carbamoyl phosphate: alanine 252 and proline 253.

This sequence belongs to the aspartate/ornithine carbamoyltransferase superfamily. ATCase family. As to quaternary structure, heterododecamer (2C3:3R2) of six catalytic PyrB chains organized as two trimers (C3), and six regulatory PyrI chains organized as three dimers (R2).

It carries out the reaction carbamoyl phosphate + L-aspartate = N-carbamoyl-L-aspartate + phosphate + H(+). Its pathway is pyrimidine metabolism; UMP biosynthesis via de novo pathway; (S)-dihydroorotate from bicarbonate: step 2/3. Its function is as follows. Catalyzes the condensation of carbamoyl phosphate and aspartate to form carbamoyl aspartate and inorganic phosphate, the committed step in the de novo pyrimidine nucleotide biosynthesis pathway. This Bacillus cytotoxicus (strain DSM 22905 / CIP 110041 / 391-98 / NVH 391-98) protein is Aspartate carbamoyltransferase catalytic subunit.